The chain runs to 307 residues: ATP synthase gamma chain (307 aa).

It belongs to the ATPase gamma chain family. F-type ATPases have 2 components, CF(1) - the catalytic core - and CF(0) - the membrane proton channel. CF(1) has five subunits: alpha(3), beta(3), gamma(1), delta(1), epsilon(1). CF(0) has three main subunits: a, b and c.

The protein resides in the cell membrane. In terms of biological role, produces ATP from ADP in the presence of a proton gradient across the membrane. The gamma chain is believed to be important in regulating ATPase activity and the flow of protons through the CF(0) complex. In Bifidobacterium longum (strain DJO10A), this protein is ATP synthase gamma chain.